The primary structure comprises 379 residues: Probable pectin lyase A (379 aa).

Positions 1–19 are cleaved as a signal peptide; that stretch reads MKFALLSGVAAGLLPVVSA. 2 cysteine pairs are disulfide-bonded: Cys82–Cys101 and Cys91–Cys225. Residue Arg255 is part of the active site. Cys322 and Cys330 are oxidised to a cystine.

Belongs to the polysaccharide lyase 1 family.

It localises to the secreted. The catalysed reaction is Eliminative cleavage of (1-&gt;4)-alpha-D-galacturonan methyl ester to give oligosaccharides with 4-deoxy-6-O-methyl-alpha-D-galact-4-enuronosyl groups at their non-reducing ends.. In terms of biological role, pectinolytic enzymes consist of four classes of enzymes: pectin lyase, polygalacturonase, pectin methylesterase and rhamnogalacturonase. Among pectinolytic enzymes, pectin lyase is the most important in depolymerization of pectin, since it cleaves internal glycosidic bonds of highly methylated pectins. This is Probable pectin lyase A (pelA) from Aspergillus oryzae (strain ATCC 42149 / RIB 40) (Yellow koji mold).